The sequence spans 152 residues: MFRGATMVNLDSKGRLAVPTRYRESLNEESQGQMVCTIDLHQPCLLLYPLPEWEIIEQKLSRLSSMNPAERRVQRLLLGHASECQMDGAGRLLIAGTLRQHAGLNKEVMLVGQFNKFELWDEQTWYQQVKDDIDAEQSTQEPLSERLQGLSL.

SpoVT-AbrB domains are found at residues Ala-5–Glu-52 and Ala-81–Thr-124.

This sequence belongs to the MraZ family. As to quaternary structure, forms oligomers.

It localises to the cytoplasm. The protein localises to the nucleoid. Functionally, negatively regulates its own expression and that of the subsequent genes in the proximal part of the division and cell wall (dcw) gene cluster. Acts by binding directly to DNA. May also regulate the expression of genes outside the dcw cluster. This chain is Transcriptional regulator MraZ, found in Yersinia pestis bv. Antiqua (strain Antiqua).